A 271-amino-acid polypeptide reads, in one-letter code: Eukaryotic translation initiation factor 2 subunit beta (271 aa).

The C4-type zinc-finger motif lies at 223–247 (CLGCQSPDTILSKENRLFFLRCEKC).

This sequence belongs to the eIF-2-beta/eIF-5 family. Eukaryotic translation initiation factor 2 eIF2 is a heterotrimeric complex composed of an alpha, a beta and a gamma subunit.

The protein resides in the cytoplasm. It localises to the cytosol. Functionally, component of the eIF2 complex that functions in the early steps of protein synthesis by forming a ternary complex with GTP and initiator tRNA. This complex binds to a 40S ribosomal subunit, followed by mRNA binding to form a 43S pre-initiation complex (43S PIC). Junction of the 60S ribosomal subunit to form the 80S initiation complex is preceded by hydrolysis of the GTP bound to eIF2 and release of an eIF2-GDP binary complex. In order for eIF2 to recycle and catalyze another round of initiation, the GDP bound to eIF2 must exchange with GTP by way of a reaction catalyzed by eIF2B. The polypeptide is Eukaryotic translation initiation factor 2 subunit beta (Malus domestica (Apple)).